The following is a 342-amino-acid chain: Manganese-dependent ADP-ribose/CDP-alcohol diphosphatase (342 aa).

7 residues coordinate Zn(2+): Asp-18, Gln-20, Asp-67, Asn-103, His-239, His-276, and His-278.

The protein belongs to the ADPRibase-Mn family. As to quaternary structure, monomer. The cofactor is Mg(2+).

It carries out the reaction CDP-choline + H2O = phosphocholine + CMP + 2 H(+). It catalyses the reaction ADP-D-ribose + H2O = D-ribose 5-phosphate + AMP + 2 H(+). The catalysed reaction is CDP-glycerol + H2O = sn-glycerol 3-phosphate + CMP + 2 H(+). Functionally, hydrolyzes ADP-ribose, IDP-ribose, CDP-glycerol, CDP-choline and CDP-ethanolamine, but not other non-reducing ADP-sugars or CDP-glucose. In Xenopus tropicalis (Western clawed frog), this protein is Manganese-dependent ADP-ribose/CDP-alcohol diphosphatase (adprm).